The chain runs to 343 residues: NADH-ubiquinone oxidoreductase chain 2 (343 aa).

The next 8 membrane-spanning stretches (helical) occupy residues 1-21, 59-81, 96-116, 150-170, 178-198, 200-220, 241-261, and 270-290; these read MNPM…TMIT, YYLI…ALNT, TIIT…SWLP, NITL…LGSL, LMAF…TMAP, ISTL…LLIN, MTIL…SGFM, and LISM…LLSL.

It belongs to the complex I subunit 2 family.

The protein resides in the mitochondrion inner membrane. It catalyses the reaction a ubiquinone + NADH + 5 H(+)(in) = a ubiquinol + NAD(+) + 4 H(+)(out). Core subunit of the mitochondrial membrane respiratory chain NADH dehydrogenase (Complex I) that is believed to belong to the minimal assembly required for catalysis. Complex I functions in the transfer of electrons from NADH to the respiratory chain. The immediate electron acceptor for the enzyme is believed to be ubiquinone. This chain is NADH-ubiquinone oxidoreductase chain 2 (MT-ND2), found in Lycodon semicarinatus (Ryukyu odd-tooth snake).